A 69-amino-acid chain; its full sequence is Putative antitoxin AF_1481 (69 aa).

It belongs to the UPF0330 family.

Possibly the antitoxin component of a type II toxin-antitoxin (TA) system. This Archaeoglobus fulgidus (strain ATCC 49558 / DSM 4304 / JCM 9628 / NBRC 100126 / VC-16) protein is Putative antitoxin AF_1481.